A 756-amino-acid chain; its full sequence is Nucleomorphin (756 aa).

Residues M1–S10 show a composition bias toward polar residues. The disordered stretch occupies residues M1 to S113. Low complexity-rich tracts occupy residues N16–S66 and N75–N94. A compositionally biased stretch (polar residues) spans G95–S113. In terms of domain architecture, BRCT spans L124 to V216. Disordered stretches follow at residues N229 to Q251, P272 to E298, K359 to N403, and T422 to L463. 3 stretches are compositionally biased toward low complexity: residues L285–E298, N364–K401, and T422–S432. Positions K448 to H459 are enriched in basic residues. The Nuclear localization signal motif lies at K464–K480. The segment at A495–K512 is calmodulin binding. Residues S514–I529 show a composition bias toward polar residues. The tract at residues S514 to E587 is disordered. Acidic residues predominate over residues Y536 to E587. Residues D537–D588 form a DEED region region. Calmodulin binding stretches follow at residues V589–K606 and K596–H613. Disordered stretches follow at residues H613–R639 and L660–I700. Positions L668–T691 are enriched in polar residues.

As to quaternary structure, interacts with calmodulin and CBPD1 in the presence of Ca(2+).

The protein resides in the nucleus. This is Nucleomorphin (numA) from Dictyostelium discoideum (Social amoeba).